The chain runs to 510 residues: Beta-1,4 N-acetylgalactosaminyltransferase 2 (510 aa).

At methionine 1–leucine 15 the chain is on the cytoplasmic side. A helical; Signal-anchor for type II membrane protein membrane pass occupies residues leucine 16–valine 32. Residues arginine 33–threonine 510 lie on the Lumenal side of the membrane. Asparagine 390 is a glycosylation site (N-linked (GlcNAc...) asparagine).

Belongs to the glycosyltransferase 2 family. In terms of assembly, homodimer; disulfide-linked.

The protein localises to the golgi apparatus. It is found in the trans-Golgi network membrane. It catalyses the reaction an N-acetyl-alpha-neuraminyl-(2-&gt;3)-beta-D-galactosyl derivative + UDP-N-acetyl-alpha-D-galactosamine = an N-acetyl-beta-D-galactosaminyl-(1-&gt;4)-[N-acetyl-alpha-neuraminyl-(2-&gt;3)]-beta-D-galactosyl derivative + UDP + H(+). It carries out the reaction a 3-O-{alpha-Neu5Ac-(2-&gt;3)-beta-D-Gal-(1-&gt;3)-[alpha-Neu5Ac-(2-&gt;6)]-alpha-D-GalNAc}-L-seryl-[protein] + UDP-N-acetyl-alpha-D-galactosamine = a 3-O-{[alpha-Neu5Ac-(2-&gt;3)]-beta-D-GalNAc-(1-&gt;4)-beta-D-Gal-(1-&gt;3)-[alpha-Neu5Ac-(2-&gt;6)]-alpha-D-GalNAc}-L-seryl-[protein] + UDP + H(+). The enzyme catalyses a 3-O-{alpha-Neu5Ac-(2-&gt;3)-beta-D-Gal-(1-&gt;3)-[alpha-Neu5Ac-(2-&gt;6)]-alpha-D-GalNAc}-L-threonyl-[protein] + UDP-N-acetyl-alpha-D-galactosamine = a 3-O-{[alpha-Neu5Ac-(2-&gt;3)]-beta-D-GalNAc-(1-&gt;4)-beta-D-Gal-(1-&gt;3)-[alpha-Neu5Ac-(2-&gt;6)]-alpha-D-GalNAc}-L-threonyl-[protein] + UDP + H(+). The catalysed reaction is a neolactoside IV(3)-alpha-NeuAc-nLc4Cer + UDP-N-acetyl-alpha-D-galactosamine = a neolactoside IV(4)-GalNAc,IV(3)-alpha-NeuAc-nLc4Cer + UDP + H(+). The protein operates within protein modification; protein glycosylation. It participates in glycolipid biosynthesis. Its function is as follows. Beta-1,4 N-acetylgalactosaminyltransferase involved in the biosynthesis of T-lymphocyte CT glycan antigen carried by CD45 family of protein phosphatases. Catalyzes the transfer of N-acetylgalactosamine (GalNAc) group in a beta-1,4-linkage from UDP-GalNAc to the galactose residue of NeuAcalpha2-&gt;3Gal-R to form GalNAcbeta1-&gt;4(NeuAcalpha2-&gt;3)Gal-R glycan epitope. This chain is Beta-1,4 N-acetylgalactosaminyltransferase 2, found in Mus musculus (Mouse).